A 235-amino-acid chain; its full sequence is MIYLKKSFNSTIKVKEMAPEERPREKMLAKGVKSLSNAELLAILLRTGNKNKNAIELANYIINRDIQGIRHLEDMTIEELCNIDGIGLSKSTQIKAALELGSRVASFKPIKYKIMNPWDIQRYYMDSLRYLKKEVFKAVLLNTKNEIISDVDVSIGTLSSSLVHPREVFKEAIRRSASKIIVMHNHPSGSVEPSREDKNITSRLIKCGEIIGIEIIDHIIIGDGLYFSFKENMII.

One can recognise an MPN domain in the interval 113-235 (KIMNPWDIQR…YFSFKENMII (123 aa)). Zn(2+)-binding residues include H184, H186, and D197. The JAMM motif signature appears at 184-197 (HNHPSGSVEPSRED).

It belongs to the UPF0758 family.

The protein is UPF0758 protein CD630_11440 of Clostridioides difficile (strain 630) (Peptoclostridium difficile).